The sequence spans 238 residues: Purine nucleoside phosphorylase DeoD-type 1 (238 aa).

An a purine D-ribonucleoside-binding site is contributed by His5. Phosphate contacts are provided by residues Gly21, Arg25, Arg44, and Arg88–Ser91. A purine D-ribonucleoside is bound by residues Glu180–Glu182 and Ser204–Asp205. The active-site Proton donor is Asp205.

The protein belongs to the PNP/UDP phosphorylase family. Homohexamer; trimer of homodimers.

The catalysed reaction is a purine D-ribonucleoside + phosphate = a purine nucleobase + alpha-D-ribose 1-phosphate. It catalyses the reaction a purine 2'-deoxy-D-ribonucleoside + phosphate = a purine nucleobase + 2-deoxy-alpha-D-ribose 1-phosphate. Its function is as follows. Catalyzes the reversible phosphorolytic breakdown of the N-glycosidic bond in the beta-(deoxy)ribonucleoside molecules, with the formation of the corresponding free purine bases and pentose-1-phosphate. The polypeptide is Purine nucleoside phosphorylase DeoD-type 1 (Aliivibrio fischeri (strain ATCC 700601 / ES114) (Vibrio fischeri)).